Here is a 473-residue protein sequence, read N- to C-terminus: Ribulose bisphosphate carboxylase large chain (473 aa).

Residues Asn116 and Thr166 each contribute to the substrate site. Lys168 acts as the Proton acceptor in catalysis. A substrate-binding site is contributed by Lys170. Residues Lys194, Asp196, and Glu197 each contribute to the Mg(2+) site. An N6-carboxylysine modification is found at Lys194. The Proton acceptor role is filled by His287. Substrate contacts are provided by Arg288, His320, and Ser372.

Belongs to the RuBisCO large chain family. Type I subfamily. Heterohexadecamer of 8 large chains and 8 small chains. Mg(2+) is required as a cofactor.

It carries out the reaction 2 (2R)-3-phosphoglycerate + 2 H(+) = D-ribulose 1,5-bisphosphate + CO2 + H2O. It catalyses the reaction D-ribulose 1,5-bisphosphate + O2 = 2-phosphoglycolate + (2R)-3-phosphoglycerate + 2 H(+). Its function is as follows. RuBisCO catalyzes two reactions: the carboxylation of D-ribulose 1,5-bisphosphate, the primary event in carbon dioxide fixation, as well as the oxidative fragmentation of the pentose substrate. Both reactions occur simultaneously and in competition at the same active site. The polypeptide is Ribulose bisphosphate carboxylase large chain (Nitrosomonas europaea (strain ATCC 19718 / CIP 103999 / KCTC 2705 / NBRC 14298)).